The chain runs to 424 residues: Phosphomethylpyrimidine synthase (424 aa).

Substrate contacts are provided by residues Asn-66, Met-95, Tyr-124, His-163, 185–187, 226–229, and Glu-265; these read SRG and DGMR. His-269 is a binding site for Zn(2+). Position 292 (Phe-292) interacts with substrate. His-333 is a Zn(2+) binding site. Positions 408, 411, and 415 each coordinate [4Fe-4S] cluster.

This sequence belongs to the ThiC family. The cofactor is [4Fe-4S] cluster.

The catalysed reaction is 5-amino-1-(5-phospho-beta-D-ribosyl)imidazole + S-adenosyl-L-methionine = 4-amino-2-methyl-5-(phosphooxymethyl)pyrimidine + CO + 5'-deoxyadenosine + formate + L-methionine + 3 H(+). It functions in the pathway cofactor biosynthesis; thiamine diphosphate biosynthesis. Catalyzes the synthesis of the hydroxymethylpyrimidine phosphate (HMP-P) moiety of thiamine from aminoimidazole ribotide (AIR) in a radical S-adenosyl-L-methionine (SAM)-dependent reaction. The polypeptide is Phosphomethylpyrimidine synthase (Thermotoga sp. (strain RQ2)).